The sequence spans 230 residues: Protein LURP-one-related 11 (230 aa).

Belongs to the LOR family.

Might be related to the phospholipid scramblase and tubby-like superfamily of membrane tethered transcription factors. The protein is Protein LURP-one-related 11 of Arabidopsis thaliana (Mouse-ear cress).